We begin with the raw amino-acid sequence, 593 residues long: Tyrosine-protein phosphatase non-receptor type 11 (593 aa).

The residue at position 2 (T2) is an N-acetylthreonine. SH2 domains lie at 6–102 (WFHP…KYPL) and 112–216 (WFHG…KQPL). A phosphotyrosine mark is found at Y62 and Y66. Positions 247-517 (FWEEFETLQQ…EAQYRFIYMA (271 aa)) constitute a Tyrosine-protein phosphatase domain. Residues D425, 459–465 (CSAGIGR), and Q506 each bind substrate. C459 acts as the Phosphocysteine intermediate in catalysis. Residues Y542 and Y580 each carry the phosphotyrosine; by PDGFR modification.

The protein belongs to the protein-tyrosine phosphatase family. Non-receptor class 2 subfamily. In terms of assembly, interacts with phosphorylated SIT1, LIME1, BCAR3 and MZPL1. Interacts with FCRL4, FCRL6, ANKHD1, SHB, INPP5D/SHIP1 and CD84. Interacts with MILR1 (tyrosine-phosphorylated). Interacts with FLT1 (tyrosine-phosphorylated), FLT3 (tyrosine-phosphorylated), FLT4 (tyrosine-phosphorylated), KIT and GRB2. Interacts with PTPNS1. Interacts with KIR2DL1; the interaction is enhanced by ARRB2. Interacts (via SH2 domain) with TEK/TIE2 (tyrosine phosphorylated). Interacts with GAB2. Interacts with TERT; the interaction retains TERT in the nucleus. Interacts with PECAM1 and FER. Interacts with EPHA2 (activated); participates in PTK2/FAK1 dephosphorylation in EPHA2 downstream signaling. Interacts with PDGFRA (tyrosine phosphorylated). Interacts with PDGFRB (tyrosine phosphorylated); this interaction increases the PTPN11 phosphatase activity. Interacts with ROS1; this mediates PTPN11 phosphorylation. Interacts with CEACAM1 (via cytoplasmic domain); this interaction depends on the monomer/dimer equilibrium and is phosphorylation-dependent. Interacts with MPIG6B (via ITIM motif). Interacts with SIGLEC10. Interacts with CLEC12B (via ITIM motif); this interaction triggers dephosphorylation and activation of PTPN11. Interacts (via SH2 domains) with NEDD9/CAS-L; the interaction is enhanced when NEDD9/CAS-L is tyrosine phosphorylated. Post-translationally, phosphorylated on Tyr-542 and Tyr-580 upon receptor protein tyrosine kinase activation; which creates a binding site for GRB2 and other SH2-containing proteins. Phosphorylated upon activation of the receptor-type kinase FLT3. Phosphorylated upon activation of the receptor-type kinase PDGFRA. Phosphorylated by activated PDGFRB. In terms of tissue distribution, expressed in brain, muscle and lung.

It is found in the cytoplasm. It carries out the reaction O-phospho-L-tyrosyl-[protein] + H2O = L-tyrosyl-[protein] + phosphate. Inhibited by orthovanadate, molybdate and spermidine. In terms of biological role, acts downstream of various receptor and cytoplasmic protein tyrosine kinases to participate in the signal transduction from the cell surface to the nucleus. Positively regulates MAPK signal transduction pathway. Dephosphorylates GAB1, ARHGAP35 and EGFR. Dephosphorylates ROCK2 at 'Tyr-722' resulting in stimulation of its RhoA binding activity. Dephosphorylates CDC73. Dephosphorylates SOX9 on tyrosine residues, leading to inactivate SOX9 and promote ossification. Dephosphorylates tyrosine-phosphorylated NEDD9/CAS-L. This Rattus norvegicus (Rat) protein is Tyrosine-protein phosphatase non-receptor type 11 (Ptpn11).